The sequence spans 335 residues: Acetyl-coenzyme A carboxylase carboxyl transferase subunit alpha (335 aa).

A CoA carboxyltransferase C-terminal domain is found at 40–294 (QLETLAARRR…KEAIEKHLNA (255 aa)).

This sequence belongs to the AccA family. In terms of assembly, acetyl-CoA carboxylase is a heterohexamer composed of biotin carboxyl carrier protein (AccB), biotin carboxylase (AccC) and two subunits each of ACCase subunit alpha (AccA) and ACCase subunit beta (AccD).

The protein localises to the cytoplasm. It carries out the reaction N(6)-carboxybiotinyl-L-lysyl-[protein] + acetyl-CoA = N(6)-biotinyl-L-lysyl-[protein] + malonyl-CoA. Its pathway is lipid metabolism; malonyl-CoA biosynthesis; malonyl-CoA from acetyl-CoA: step 1/1. Its function is as follows. Component of the acetyl coenzyme A carboxylase (ACC) complex. First, biotin carboxylase catalyzes the carboxylation of biotin on its carrier protein (BCCP) and then the CO(2) group is transferred by the carboxyltransferase to acetyl-CoA to form malonyl-CoA. The sequence is that of Acetyl-coenzyme A carboxylase carboxyl transferase subunit alpha from Prochlorococcus marinus (strain MIT 9215).